The following is a 350-amino-acid chain: Phenylalanine--tRNA ligase alpha subunit (350 aa).

E260 is a binding site for Mg(2+).

Belongs to the class-II aminoacyl-tRNA synthetase family. Phe-tRNA synthetase alpha subunit type 1 subfamily. In terms of assembly, tetramer of two alpha and two beta subunits. It depends on Mg(2+) as a cofactor.

It localises to the cytoplasm. The enzyme catalyses tRNA(Phe) + L-phenylalanine + ATP = L-phenylalanyl-tRNA(Phe) + AMP + diphosphate + H(+). This chain is Phenylalanine--tRNA ligase alpha subunit, found in Mycoplasma capricolum subsp. capricolum (strain California kid / ATCC 27343 / NCTC 10154).